The primary structure comprises 921 residues: Isoleucine--tRNA ligase (921 aa).

The 'HIGH' region signature appears at 57 to 67 (PYANGDIHMGH). E552 provides a ligand contact to L-isoleucyl-5'-AMP. A 'KMSKS' region motif is present at residues 593–597 (KMSKS). K596 provides a ligand contact to ATP. The Zn(2+) site is built by C888, C891, C908, and C911.

The protein belongs to the class-I aminoacyl-tRNA synthetase family. IleS type 1 subfamily. Monomer. Requires Zn(2+) as cofactor.

The protein resides in the cytoplasm. The enzyme catalyses tRNA(Ile) + L-isoleucine + ATP = L-isoleucyl-tRNA(Ile) + AMP + diphosphate. Its function is as follows. Catalyzes the attachment of isoleucine to tRNA(Ile). As IleRS can inadvertently accommodate and process structurally similar amino acids such as valine, to avoid such errors it has two additional distinct tRNA(Ile)-dependent editing activities. One activity is designated as 'pretransfer' editing and involves the hydrolysis of activated Val-AMP. The other activity is designated 'posttransfer' editing and involves deacylation of mischarged Val-tRNA(Ile). This chain is Isoleucine--tRNA ligase, found in Bacillus cereus (strain G9842).